We begin with the raw amino-acid sequence, 82 residues long: Acyl carrier protein (82 aa).

Residues Leu3 to Lys81 enclose the Carrier domain. The residue at position 41 (Ser41) is an O-(pantetheine 4'-phosphoryl)serine.

Belongs to the acyl carrier protein (ACP) family. 4'-phosphopantetheine is transferred from CoA to a specific serine of apo-ACP by AcpS. This modification is essential for activity because fatty acids are bound in thioester linkage to the sulfhydryl of the prosthetic group.

It localises to the cytoplasm. It participates in lipid metabolism; fatty acid biosynthesis. In terms of biological role, carrier of the growing fatty acid chain in fatty acid biosynthesis. In Tropheryma whipplei (strain Twist) (Whipple's bacillus), this protein is Acyl carrier protein.